The primary structure comprises 577 residues: Arginine--tRNA ligase (577 aa).

The short motif at 122-132 (PNVAKEMHVGH) is the 'HIGH' region element.

Belongs to the class-I aminoacyl-tRNA synthetase family. In terms of assembly, monomer.

It localises to the cytoplasm. The enzyme catalyses tRNA(Arg) + L-arginine + ATP = L-arginyl-tRNA(Arg) + AMP + diphosphate. This chain is Arginine--tRNA ligase, found in Edwardsiella ictaluri (strain 93-146).